A 232-amino-acid chain; its full sequence is MRVHRLPENFSLERARRAQLAIARMVLEEDSLPESVRRAAGVDVAFKGDYAFAAAVVVEYPSFSVVDYSVTRTEVRFPYVPTLLAFREVWPAYTALKRLKSEPDVLLVDGNGRLHPFKAGFACHLGVLVDKPTIGVAKKLLVGEVGSWKSGVAPVLYRGEVLGMAVKTSERSKPVFVSIGHKISLNTAVWIVRMFTKRGLRLPEPLRLAHLYATAYARGNMEEKDFYLDEPS.

Mg(2+)-binding residues include Asp-43 and Asp-109.

It belongs to the endonuclease V family. Mg(2+) serves as cofactor.

The protein resides in the cytoplasm. It catalyses the reaction Endonucleolytic cleavage at apurinic or apyrimidinic sites to products with a 5'-phosphate.. Its function is as follows. DNA repair enzyme involved in the repair of deaminated bases. Selectively cleaves double-stranded DNA at the second phosphodiester bond 3' to a deoxyinosine leaving behind the intact lesion on the nicked DNA. The polypeptide is Endonuclease V (Thermofilum pendens (strain DSM 2475 / Hrk 5)).